A 548-amino-acid chain; its full sequence is 2-succinyl-5-enolpyruvyl-6-hydroxy-3-cyclohexene-1-carboxylate synthase (548 aa).

This sequence belongs to the TPP enzyme family. MenD subfamily. Homodimer. The cofactor is Mg(2+). Requires Mn(2+) as cofactor. Thiamine diphosphate serves as cofactor.

It carries out the reaction isochorismate + 2-oxoglutarate + H(+) = 5-enolpyruvoyl-6-hydroxy-2-succinyl-cyclohex-3-ene-1-carboxylate + CO2. Its pathway is quinol/quinone metabolism; 1,4-dihydroxy-2-naphthoate biosynthesis; 1,4-dihydroxy-2-naphthoate from chorismate: step 2/7. The protein operates within quinol/quinone metabolism; menaquinone biosynthesis. In terms of biological role, catalyzes the thiamine diphosphate-dependent decarboxylation of 2-oxoglutarate and the subsequent addition of the resulting succinic semialdehyde-thiamine pyrophosphate anion to isochorismate to yield 2-succinyl-5-enolpyruvyl-6-hydroxy-3-cyclohexene-1-carboxylate (SEPHCHC). The chain is 2-succinyl-5-enolpyruvyl-6-hydroxy-3-cyclohexene-1-carboxylate synthase from Mycobacterium ulcerans (strain Agy99).